Consider the following 53-residue polypeptide: MVFEDVFVFFYIGLKNKFLFFIFYFLFFFIFFTVFGNLNFLGNEGLKCFYIVI.

Residues Phe-18–Leu-38 traverse the membrane as a helical segment.

The protein localises to the membrane. This is an uncharacterized protein from Dictyostelium discoideum (Social amoeba).